The sequence spans 299 residues: Regucalcin (299 aa).

An a divalent metal cation-binding site is contributed by glutamate 18. Residues arginine 101, asparagine 103, and glutamate 121 each contribute to the substrate site. Lysine 144 is subject to N6-succinyllysine. Asparagine 154 and aspartate 204 together coordinate a divalent metal cation. Aspartate 204 serves as the catalytic Proton donor/acceptor. Lysine 244 and lysine 253 each carry N6-succinyllysine.

This sequence belongs to the SMP-30/CGR1 family. In terms of assembly, monomer. Zn(2+) is required as a cofactor. The cofactor is Mn(2+). It depends on Ca(2+) as a cofactor. Mg(2+) serves as cofactor. As to expression, mainly present in the liver. Weak expression was found in the brain, lung and kidney.

The protein localises to the cytoplasm. The catalysed reaction is D-glucono-1,5-lactone + H2O = D-gluconate + H(+). Its pathway is cofactor biosynthesis; L-ascorbate biosynthesis via UDP-alpha-D-glucuronate pathway; L-ascorbate from UDP-alpha-D-glucuronate: step 3/4. Gluconolactonase with low activity towards other sugar lactones, including gulonolactone and galactonolactone. Catalyzes a key step in ascorbic acid (vitamin C) biosynthesis. Can also hydrolyze diisopropyl phosphorofluoridate and phenylacetate (in vitro). Calcium-binding protein. Modulates Ca(2+) signaling, and Ca(2+)-dependent cellular processes and enzyme activities. The sequence is that of Regucalcin (Rgn) from Mus musculus (Mouse).